The chain runs to 623 residues: Glutathione import ATP-binding protein GsiA (623 aa).

ABC transporter domains are found at residues 15-269 (VENL…RALL) and 314-564 (LRVR…RKLL). Residues 49–56 (GESGSGKS) and 357–364 (GESGSGKS) each bind ATP.

This sequence belongs to the ABC transporter superfamily. Glutathione importer (TC 3.A.1.5.11) family. The complex is composed of two ATP-binding proteins (GsiA), two transmembrane proteins (GsiC and GsiD) and a solute-binding protein (GsiB).

The protein localises to the cell inner membrane. The catalysed reaction is glutathione(out) + ATP + H2O = glutathione(in) + ADP + phosphate + H(+). With respect to regulation, inhibited by verapamil but not by carbonyl cyanide m-chlorophenylhydrazone (CCCP). Its function is as follows. Part of the ABC transporter complex GsiABCD involved in glutathione import. Responsible for energy coupling to the transport system. The protein is Glutathione import ATP-binding protein GsiA of Escherichia coli (strain K12).